The chain runs to 335 residues: Phospho-N-acetylmuramoyl-pentapeptide-transferase (335 aa).

10 helical membrane-spanning segments follow: residues 3-23, 53-73, 78-98, 118-138, 143-163, 175-195, 200-220, 226-246, 251-271, and 314-334; these read LTLI…PHFI, GGTV…ILFF, SMGL…IGFL, LSLQ…PSGI, VFGF…FWVV, IDGL…VIAI, YDVL…FIFN, VFMG…ISIA, WTLL…MLQV, and VDAF…AILY.

Belongs to the glycosyltransferase 4 family. MraY subfamily. The cofactor is Mg(2+).

It localises to the cell membrane. It catalyses the reaction UDP-N-acetyl-alpha-D-muramoyl-L-alanyl-gamma-D-glutamyl-L-lysyl-D-alanyl-D-alanine + di-trans,octa-cis-undecaprenyl phosphate = Mur2Ac(oyl-L-Ala-gamma-D-Glu-L-Lys-D-Ala-D-Ala)-di-trans,octa-cis-undecaprenyl diphosphate + UMP. Its pathway is cell wall biogenesis; peptidoglycan biosynthesis. Functionally, catalyzes the initial step of the lipid cycle reactions in the biosynthesis of the cell wall peptidoglycan: transfers peptidoglycan precursor phospho-MurNAc-pentapeptide from UDP-MurNAc-pentapeptide onto the lipid carrier undecaprenyl phosphate, yielding undecaprenyl-pyrophosphoryl-MurNAc-pentapeptide, known as lipid I. This chain is Phospho-N-acetylmuramoyl-pentapeptide-transferase, found in Streptococcus uberis (strain ATCC BAA-854 / 0140J).